Here is a 768-residue protein sequence, read N- to C-terminus: DNA replication licensing factor MCM3 homolog 3 (768 aa).

Residues 290–497 (TFDLLGNSLA…IDRQISEHVA (208 aa)) form the MCM domain. 340 to 347 (GDPSVAKS) contributes to the ATP binding site. The Arginine finger signature appears at 472–475 (SRFD). Over residues 661–670 (EMKQQADHDA) the composition is skewed to basic and acidic residues. Positions 661-690 (EMKQQADHDAGATGGTVDGHGSSGNDPMDV) are disordered. Residues 672–682 (ATGGTVDGHGS) show a composition bias toward gly residues.

This sequence belongs to the MCM family.

The protein localises to the nucleus. It carries out the reaction ATP + H2O = ADP + phosphate + H(+). Functionally, acts as a factor that allows the DNA to undergo a single round of replication per cell cycle. Required for DNA replication and cell proliferation. May act as a component of the MCM complex which is the putative replicative helicase of the replication licensing system in eukaryotic cells. The sequence is that of DNA replication licensing factor MCM3 homolog 3 (ROA3) from Zea mays (Maize).